The primary structure comprises 326 residues: 5-dehydro-2-deoxygluconokinase (326 aa).

Belongs to the carbohydrate kinase PfkB family.

The catalysed reaction is 5-dehydro-2-deoxy-D-gluconate + ATP = 6-phospho-5-dehydro-2-deoxy-D-gluconate + ADP + H(+). It functions in the pathway polyol metabolism; myo-inositol degradation into acetyl-CoA; acetyl-CoA from myo-inositol: step 5/7. Catalyzes the phosphorylation of 5-dehydro-2-deoxy-D-gluconate (2-deoxy-5-keto-D-gluconate or DKG) to 6-phospho-5-dehydro-2-deoxy-D-gluconate (DKGP). The chain is 5-dehydro-2-deoxygluconokinase from Lacticaseibacillus casei (Lactobacillus casei).